The primary structure comprises 1097 residues: Importin-5 (1097 aa).

At A2 the chain carries N-acetylalanine. HEAT repeat units lie at residues 5–38, 43–77, 95–122, 130–157, 167–201, 210–246, 254–289, 298–350, 352–386, 390–430, 432–472, 475–523, 525–568, 570–615, 617–692, 695–737, 741–780, 787–853, 856–895, 903–935, 943–983, 990–1021, 1032–1067, and 1070–1093; these read AAEQ…NIPG, TFLL…FDEV, MIIQ…NLID, PEGL…IFWN, QHYL…AAFI, LFKH…IADT, HLEA…LSET, TNIV…ACGL, GKLV…SAIG, HQQM…ATDF, PGFQ…FTED, KSLL…ADTA, EKFV…GLAV, KEKF…CKIL, KEFQ…AKEL, GFVE…ARVR, YLTQ…IEVM, NEHF…FSSY, KVLP…IEHC, AEYF…MAQY, FCTE…MKFK, EEVL…DLIE, NTNL…VVRQ, and TSGG…IQEL. In terms of domain architecture, Importin N-terminal spans 28–99; the sequence is QAEETYENIP…KSELLMIIQM (72 aa). The segment at 325-375 is ran-GTP binding; it reads DELEDDDFDSNAVAGESALDRMACGLGGKLVLPMIKEHIMQMLQNPDWKYR. Position 827 is a phosphoserine (S827).

Belongs to the importin beta family. Importin beta-3 subfamily. Interacts with RPS7 and RPL5. Interacts with RPL23A (via BIB domain). Interacts with H2A, H2B, H3 and H4 histones. Interacts with CPEB3; this mediates CPEB3 nuclear import following neuronal stimulation which enhances the interaction in a RAN-regulated manner. Interacts with AIFM2; this interaction likely mediates the translocation of AIFM2 into the nucleus upon oxidative stress. Interacts with STX3 (isoform 3). Interacts with SRP19. In terms of assembly, (Microbial infection) Interacts with HIV-1 Rev.

The protein localises to the cytoplasm. It is found in the nucleus. Its subcellular location is the nucleolus. Its function is as follows. Functions in nuclear protein import as nuclear transport receptor. Serves as receptor for nuclear localization signals (NLS) in cargo substrates. Is thought to mediate docking of the importin/substrate complex to the nuclear pore complex (NPC) through binding to nucleoporin and the complex is subsequently translocated through the pore by an energy requiring, Ran-dependent mechanism. At the nucleoplasmic side of the NPC, Ran binds to the importin, the importin/substrate complex dissociates and importin is re-exported from the nucleus to the cytoplasm where GTP hydrolysis releases Ran. The directionality of nuclear import is thought to be conferred by an asymmetric distribution of the GTP- and GDP-bound forms of Ran between the cytoplasm and nucleus. Mediates the nuclear import of ribosomal proteins RPL23A, RPS7 and RPL5. In vitro, mediates nuclear import of H2A, H2B, H3 and H4 histones. Binds to CPEB3 and mediates its nuclear import following neuronal stimulation. In case of HIV-1 infection, binds and mediates the nuclear import of HIV-1 Rev. This Homo sapiens (Human) protein is Importin-5 (IPO5).